A 363-amino-acid polypeptide reads, in one-letter code: Neutral protease 2 homolog NFIA_102630 (363 aa).

A signal peptide spans 1-19; the sequence is MKVTVLASAILALINGALA. A propeptide spanning residues 20 to 172 is cleaved from the precursor; sequence LPANAPTLDV…PQAIKLLDRR (153 aa). Cystine bridges form between Cys-178/Cys-250 and Cys-257/Cys-275. His-300 contacts Zn(2+). The active site involves Glu-301. Residues His-304 and Asp-315 each coordinate Zn(2+).

It belongs to the peptidase M35 family. Zn(2+) is required as a cofactor.

The protein resides in the secreted. The enzyme catalyses Preferential cleavage of bonds with hydrophobic residues in P1'. Also 3-Asn-|-Gln-4 and 8-Gly-|-Ser-9 bonds in insulin B chain.. Functionally, secreted metalloproteinase that allows assimilation of proteinaceous substrates. Shows high activities on basic nuclear substrates such as histone and protamine. This Neosartorya fischeri (strain ATCC 1020 / DSM 3700 / CBS 544.65 / FGSC A1164 / JCM 1740 / NRRL 181 / WB 181) (Aspergillus fischerianus) protein is Neutral protease 2 homolog NFIA_102630.